A 95-amino-acid chain; its full sequence is Protein TusB (95 aa).

It belongs to the DsrH/TusB family. As to quaternary structure, heterohexamer, formed by a dimer of trimers. The hexameric TusBCD complex contains 2 copies each of TusB, TusC and TusD. The TusBCD complex interacts with TusE.

The protein localises to the cytoplasm. Part of a sulfur-relay system required for 2-thiolation of 5-methylaminomethyl-2-thiouridine (mnm(5)s(2)U) at tRNA wobble positions. The chain is Protein TusB from Erwinia tasmaniensis (strain DSM 17950 / CFBP 7177 / CIP 109463 / NCPPB 4357 / Et1/99).